Here is a 316-residue protein sequence, read N- to C-terminus: GTPase Era (316 aa).

Residues 9–190 (RAGFAAIIGA…TAKLVSMMPE (182 aa)) enclose the Era-type G domain. Positions 17-24 (GAPNAGKS) are G1. GTP is bound at residue 17–24 (GAPNAGKS). The segment at 43–47 (QTTRF) is G2. A G3 region spans residues 64-67 (DTPG). GTP contacts are provided by residues 64–68 (DTPGI) and 140–143 (NKID). The G4 stretch occupies residues 140 to 143 (NKID). The interval 169-171 (ISA) is G5. A KH type-2 domain is found at 221 to 298 (VHEELPYAAT…HLFLHVKVKE (78 aa)).

Belongs to the TRAFAC class TrmE-Era-EngA-EngB-Septin-like GTPase superfamily. Era GTPase family. In terms of assembly, monomer.

The protein localises to the cytoplasm. It localises to the cell inner membrane. Functionally, an essential GTPase that binds both GDP and GTP, with rapid nucleotide exchange. Plays a role in 16S rRNA processing and 30S ribosomal subunit biogenesis and possibly also in cell cycle regulation and energy metabolism. The sequence is that of GTPase Era from Caulobacter vibrioides (strain ATCC 19089 / CIP 103742 / CB 15) (Caulobacter crescentus).